A 284-amino-acid polypeptide reads, in one-letter code: Phosphatidylserine decarboxylase proenzyme (284 aa).

Active-site charge relay system; for autoendoproteolytic cleavage activity residues include Asp-88, His-145, and Ser-251. Catalysis depends on Ser-251, which acts as the Schiff-base intermediate with substrate; via pyruvic acid; for decarboxylase activity. At Ser-251 the chain carries Pyruvic acid (Ser); by autocatalysis.

This sequence belongs to the phosphatidylserine decarboxylase family. PSD-B subfamily. Prokaryotic type I sub-subfamily. Heterodimer of a large membrane-associated beta subunit and a small pyruvoyl-containing alpha subunit. It depends on pyruvate as a cofactor. In terms of processing, is synthesized initially as an inactive proenzyme. Formation of the active enzyme involves a self-maturation process in which the active site pyruvoyl group is generated from an internal serine residue via an autocatalytic post-translational modification. Two non-identical subunits are generated from the proenzyme in this reaction, and the pyruvate is formed at the N-terminus of the alpha chain, which is derived from the carboxyl end of the proenzyme. The autoendoproteolytic cleavage occurs by a canonical serine protease mechanism, in which the side chain hydroxyl group of the serine supplies its oxygen atom to form the C-terminus of the beta chain, while the remainder of the serine residue undergoes an oxidative deamination to produce ammonia and the pyruvoyl prosthetic group on the alpha chain. During this reaction, the Ser that is part of the protease active site of the proenzyme becomes the pyruvoyl prosthetic group, which constitutes an essential element of the active site of the mature decarboxylase.

Its subcellular location is the cell membrane. It catalyses the reaction a 1,2-diacyl-sn-glycero-3-phospho-L-serine + H(+) = a 1,2-diacyl-sn-glycero-3-phosphoethanolamine + CO2. The protein operates within phospholipid metabolism; phosphatidylethanolamine biosynthesis; phosphatidylethanolamine from CDP-diacylglycerol: step 2/2. In terms of biological role, catalyzes the formation of phosphatidylethanolamine (PtdEtn) from phosphatidylserine (PtdSer). The sequence is that of Phosphatidylserine decarboxylase proenzyme from Polaromonas sp. (strain JS666 / ATCC BAA-500).